The sequence spans 244 residues: Ras-related protein Rab-12 (244 aa).

The residue at position 1 (M1) is an N-acetylmethionine. The segment covering 1-10 (MDPGAALQRR) has biased composition (low complexity). The tract at residues 1–37 (MDPGAALQRRAGGGGGLGAGSPALSGGQGRRRKQPPR) is disordered. 2 positions are modified to phosphoserine: S21 and S25. GDP is bound at residue G52. G52, V53, G54, K55, and T56 together coordinate GTP. 4 residues coordinate GDP: G54, K55, T56, and S57. Residue T56 coordinates Mg(2+). Short sequence motifs (switch) lie at residues 65–79 (DTFCEACKSTVGVDF) and 97–114 (DTAGQERFNSITSAYYRS). 2 residues coordinate GTP: S73 and T74. 2 residues coordinate Mg(2+): T74 and D97. G100 is a GTP binding site. The residue at position 106 (S106) is a Phosphoserine; by LRRK2. N155, K156, D158, and C159 together coordinate GDP. Positions 155, 156, and 158 each coordinate GTP. The GTP site is built by S186, A187, and K188. Residues A187 and K188 each coordinate GDP. A disordered region spans residues 225–244 (QPEPEIPPELPPPRPHVRCC). A compositionally biased stretch (pro residues) spans 228-238 (PEIPPELPPPR). 2 S-geranylgeranyl cysteine lipidation sites follow: C243 and C244.

The protein belongs to the small GTPase superfamily. Rab family. As to quaternary structure, interacts with RABIF. Interacts with OPTN. Interacts with LRRK2; interaction facilitates phosphorylation of Ser-106. Interacts with GDI1, GDI2, CHM and CHML; these interactions are disrupted by phosphorylation on Ser-106. Interacts with RILPL1 and RILPL2; these interactions are dependent on phosphorylation of Ser-106. The cofactor is Mg(2+). In terms of processing, phosphorylation of Ser-106 in the switch II region by LRRK2 prevents the association of RAB regulatory proteins, including CHM, CHML and RAB GDP dissociation inhibitors GDI1 and GDI2.

It is found in the recycling endosome membrane. Its subcellular location is the lysosome membrane. The protein localises to the golgi apparatus membrane. It localises to the cytoplasmic vesicle. The protein resides in the autophagosome. It carries out the reaction GTP + H2O = GDP + phosphate + H(+). With respect to regulation, regulated by guanine nucleotide exchange factors (GEFs) including DENND3 which promote the exchange of bound GDP for free GTP. Regulated by GTPase activating proteins (GAPs) which increase the GTP hydrolysis activity. Inhibited by GDP dissociation inhibitors (GDIs). The small GTPases Rab are key regulators of intracellular membrane trafficking, from the formation of transport vesicles to their fusion with membranes. Rabs cycle between an inactive GDP-bound form and an active GTP-bound form that is able to recruit to membranes different sets of downstream effectors directly responsible for vesicle formation, movement, tethering and fusion. RAB12 may play a role in protein transport from recycling endosomes to lysosomes regulating, for instance, the degradation of the transferrin receptor. Involved in autophagy. The polypeptide is Ras-related protein Rab-12 (Homo sapiens (Human)).